Consider the following 374-residue polypeptide: Chorismate synthase (374 aa).

An NADP(+)-binding site is contributed by Arg-55. FMN-binding positions include 132-134, Gly-293, 308-312, and Arg-335; these read RGS and KPTPS.

The protein belongs to the chorismate synthase family. FMNH2 serves as cofactor.

It carries out the reaction 5-O-(1-carboxyvinyl)-3-phosphoshikimate = chorismate + phosphate. It functions in the pathway metabolic intermediate biosynthesis; chorismate biosynthesis; chorismate from D-erythrose 4-phosphate and phosphoenolpyruvate: step 7/7. Catalyzes the anti-1,4-elimination of the C-3 phosphate and the C-6 proR hydrogen from 5-enolpyruvylshikimate-3-phosphate (EPSP) to yield chorismate, which is the branch point compound that serves as the starting substrate for the three terminal pathways of aromatic amino acid biosynthesis. This reaction introduces a second double bond into the aromatic ring system. In Methanothermobacter thermautotrophicus (strain ATCC 29096 / DSM 1053 / JCM 10044 / NBRC 100330 / Delta H) (Methanobacterium thermoautotrophicum), this protein is Chorismate synthase.